A 277-amino-acid chain; its full sequence is Co-chaperone protein DjlA (277 aa).

Residues 1 to 6 (MRYWGK) lie on the Periplasmic side of the membrane. Residues 7–31 (LLGLVLGVMYAPGVVGALLGLLVGH) traverse the membrane as a helical segment. The Cytoplasmic segment spans residues 32 to 277 (MVDRALGAKR…DLIKREKGFK (246 aa)). A J domain is found at 211–277 (DACKVLGVNS…DLIKREKGFK (67 aa)).

As to quaternary structure, homodimer.

The protein localises to the cell inner membrane. Functionally, regulatory DnaK co-chaperone. Direct interaction between DnaK and DjlA is needed for the induction of the wcaABCDE operon, involved in the synthesis of a colanic acid polysaccharide capsule, possibly through activation of the RcsB/RcsC phosphotransfer signaling pathway. The colanic acid capsule may help the bacterium survive conditions outside the host. This Yersinia pestis protein is Co-chaperone protein DjlA.